Here is a 955-residue protein sequence, read N- to C-terminus: Anion exchange protein 4 (955 aa).

Disordered stretches follow at residues 20–50, 154–190, and 331–352; these read VGQL…PEDP, HTQT…PLRQ, and PHRT…PELQ. 4 helical membrane-spanning segments follow: residues 387–407, 415–435, 472–492, and 503–523; these read AVLY…GLLG, GVLE…LMAG, VGIW…SVLV, and FCAL…LNLA. The interval 387-955 is membrane (anion exchange); sequence AVLYIYLATV…KAPEINISVN (569 aa). Asparagine 548 and asparagine 572 each carry an N-linked (GlcNAc...) asparagine glycan. 7 consecutive transmembrane segments (helical) span residues 596–616, 637–657, 684–704, 730–750, 785–804, 811–830, and 871–891; these read VPDI…FAIA, FSSI…GLAM, PWWL…LIFM, LFCV…WYVS, LTGL…APVL, VLYG…IQFM, and LWII…LGLV. The segment at 918–955 is disordered; the sequence is RNVPEKGLEPGHSFSGSDSEDSELMYQPKAPEINISVN. An N-linked (GlcNAc...) asparagine glycan is attached at asparagine 951.

This sequence belongs to the anion exchanger (TC 2.A.31) family. Highly expressed in kidney. Expressed in the outer medulla and the inner medulla in the kidney cortex. Only expressed in beta-intercalated cells.

Its subcellular location is the lateral cell membrane. It localises to the apical cell membrane. The protein resides in the basolateral cell membrane. The enzyme catalyses 2 hydrogencarbonate(out) + chloride(in) + Na(+)(out) = 2 hydrogencarbonate(in) + chloride(out) + Na(+)(in). It carries out the reaction K(+)(in) + 2 hydrogencarbonate(in) + chloride(out) = K(+)(out) + 2 hydrogencarbonate(out) + chloride(in). The catalysed reaction is Li(+)(in) + 2 hydrogencarbonate(in) + chloride(out) = Li(+)(out) + 2 hydrogencarbonate(out) + chloride(in). It catalyses the reaction Rb(+)(in) + 2 hydrogencarbonate(in) + chloride(out) = Rb(+)(out) + 2 hydrogencarbonate(out) + chloride(in). The enzyme catalyses Cs(+)(in) + 2 hydrogencarbonate(in) + chloride(out) = Cs(+)(out) + 2 hydrogencarbonate(out) + chloride(in). In terms of biological role, electroneutral Cl(-)/HCO3(-) antiporter that favors chloride ion entry and efflux of hydrogencarbonate and sodium ion across the basolateral membrane and may participat in salivary secretion. Also mediates Cl(-)/HCO3(-) exchange activity in the presence of K(+) as well as Cs(+), Li(+), and Rb(+). Does not contribute to Cl(-)/HCO3(-) exchanger in the apical membrane of the upper villous epithelium. The protein is Anion exchange protein 4 of Oryctolagus cuniculus (Rabbit).